A 165-amino-acid chain; its full sequence is Protein-export protein SecB (165 aa).

Belongs to the SecB family. As to quaternary structure, homotetramer, a dimer of dimers. One homotetramer interacts with 1 SecA dimer.

It is found in the cytoplasm. One of the proteins required for the normal export of preproteins out of the cell cytoplasm. It is a molecular chaperone that binds to a subset of precursor proteins, maintaining them in a translocation-competent state. It also specifically binds to its receptor SecA. This chain is Protein-export protein SecB, found in Marinobacter nauticus (strain ATCC 700491 / DSM 11845 / VT8) (Marinobacter aquaeolei).